An 81-amino-acid polypeptide reads, in one-letter code: Small ribosomal subunit protein bS16 (81 aa).

The protein belongs to the bacterial ribosomal protein bS16 family.

The protein is Small ribosomal subunit protein bS16 of Neisseria meningitidis serogroup C (strain 053442).